We begin with the raw amino-acid sequence, 252 residues long: Large ribosomal subunit protein uL4 (252 aa).

This sequence belongs to the universal ribosomal protein uL4 family. As to quaternary structure, part of the 50S ribosomal subunit.

Its function is as follows. One of the primary rRNA binding proteins, this protein initially binds near the 5'-end of the 23S rRNA. It is important during the early stages of 50S assembly. It makes multiple contacts with different domains of the 23S rRNA in the assembled 50S subunit and ribosome. In terms of biological role, forms part of the polypeptide exit tunnel. The chain is Large ribosomal subunit protein uL4 from Methanococcus maripaludis (strain DSM 14266 / JCM 13030 / NBRC 101832 / S2 / LL).